We begin with the raw amino-acid sequence, 202 residues long: UPF0056 membrane protein PH0214 (202 aa).

6 helical membrane passes run 5-25, 47-67, 76-96, 104-124, 135-155, and 174-194; these read ILSS…ILLV, IGFI…QDIF, VAGG…GGMV, ILAL…AAIT, IIVS…LMMI, and IIGL…AGGI.

This sequence belongs to the UPF0056 (MarC) family.

It localises to the cell membrane. This is UPF0056 membrane protein PH0214 from Pyrococcus horikoshii (strain ATCC 700860 / DSM 12428 / JCM 9974 / NBRC 100139 / OT-3).